Consider the following 532-residue polypeptide: tRNA-2-methylthio-N(6)-dimethylallyladenosine synthase (532 aa).

The tract at residues 1-21 (MTSTVAHGAGSAGPADDVEPM) is disordered. The region spanning 24 to 140 (RTYQVRTYGC…LPALLDRARH (117 aa)) is the MTTase N-terminal domain. The [4Fe-4S] cluster site is built by cysteine 33, cysteine 69, cysteine 103, cysteine 177, cysteine 181, and cysteine 184. Residues 163–399 (RESAYAAWVS…VELQEQISLE (237 aa)) form the Radical SAM core domain. One can recognise a TRAM domain in the interval 402-470 (RAIVGQRVEL…PHHLIADGGI (69 aa)). The segment at 510–532 (TSCGSAGGCGSADGAGSSAGDPQ) is disordered. Residues 523-532 (GAGSSAGDPQ) are compositionally biased toward low complexity.

It belongs to the methylthiotransferase family. MiaB subfamily. In terms of assembly, monomer. [4Fe-4S] cluster serves as cofactor.

The protein resides in the cytoplasm. The catalysed reaction is N(6)-dimethylallyladenosine(37) in tRNA + (sulfur carrier)-SH + AH2 + 2 S-adenosyl-L-methionine = 2-methylsulfanyl-N(6)-dimethylallyladenosine(37) in tRNA + (sulfur carrier)-H + 5'-deoxyadenosine + L-methionine + A + S-adenosyl-L-homocysteine + 2 H(+). In terms of biological role, catalyzes the methylthiolation of N6-(dimethylallyl)adenosine (i(6)A), leading to the formation of 2-methylthio-N6-(dimethylallyl)adenosine (ms(2)i(6)A) at position 37 in tRNAs that read codons beginning with uridine. The chain is tRNA-2-methylthio-N(6)-dimethylallyladenosine synthase from Mycobacterium ulcerans (strain Agy99).